Here is a 309-residue protein sequence, read N- to C-terminus: Ribosomal RNA small subunit methyltransferase H (309 aa).

S-adenosyl-L-methionine-binding positions include 39–41 (GGH), D59, F83, D100, and Q107.

The protein belongs to the methyltransferase superfamily. RsmH family.

It is found in the cytoplasm. It carries out the reaction cytidine(1402) in 16S rRNA + S-adenosyl-L-methionine = N(4)-methylcytidine(1402) in 16S rRNA + S-adenosyl-L-homocysteine + H(+). Functionally, specifically methylates the N4 position of cytidine in position 1402 (C1402) of 16S rRNA. This is Ribosomal RNA small subunit methyltransferase H from Delftia acidovorans (strain DSM 14801 / SPH-1).